Reading from the N-terminus, the 256-residue chain is Type II phosphatidylinositol 4,5-bisphosphate 4-phosphatase (256 aa).

Basic and acidic residues predominate over residues 1-10 (MAADGIDERS). The interval 1–25 (MAADGIDERSPLISPSSGNVTPTAP) is disordered. Residues 13 to 22 (ISPSSGNVTP) show a composition bias toward polar residues. Cys106 is a catalytic residue. The CX5R motif motif lies at 106-112 (CKDISRR). 2 helical membrane-spanning segments follow: residues 191–211 (CCTYITMGMICIFIGVGLTVG) and 226–246 (WAVAYLVGLVCLVRACYWGAI).

Its subcellular location is the late endosome membrane. It is found in the lysosome membrane. The enzyme catalyses a 1,2-diacyl-sn-glycero-3-phospho-(1D-myo-inositol-4,5-bisphosphate) + H2O = a 1,2-diacyl-sn-glycero-3-phospho-(1D-myo-inositol-5-phosphate) + phosphate. In terms of biological role, catalyzes the hydrolysis of phosphatidylinositol-4,5-bisphosphate (PtdIns-4,5-P2) to phosphatidylinositol-4-phosphate (PtdIns-4-P). In Xenopus laevis (African clawed frog), this protein is Type II phosphatidylinositol 4,5-bisphosphate 4-phosphatase.